The sequence spans 244 residues: tRNA pseudouridine synthase A (244 aa).

Catalysis depends on Asp-52, which acts as the Nucleophile. Tyr-110 is a substrate binding site.

It belongs to the tRNA pseudouridine synthase TruA family. As to quaternary structure, homodimer.

It carries out the reaction uridine(38/39/40) in tRNA = pseudouridine(38/39/40) in tRNA. Formation of pseudouridine at positions 38, 39 and 40 in the anticodon stem and loop of transfer RNAs. This chain is tRNA pseudouridine synthase A, found in Clostridium botulinum (strain Alaska E43 / Type E3).